The sequence spans 184 residues: Photosystem I assembly protein Ycf4 (184 aa).

The next 2 membrane-spanning stretches (helical) occupy residues 22 to 42 (FFWAFILFLGSLGFLLVGTSS) and 57 to 77 (IIFFPQGIVMSFYGIAGLFIS).

It belongs to the Ycf4 family.

It localises to the plastid. It is found in the chloroplast thylakoid membrane. Functionally, seems to be required for the assembly of the photosystem I complex. This is Photosystem I assembly protein Ycf4 from Aethionema grandiflorum (Persian stone-cress).